Reading from the N-terminus, the 187-residue chain is Putative acyl-coenzyme A oxidase At3g06690 (187 aa).

The segment at Met1–Pro21 is disordered.

The protein belongs to the acyl-CoA oxidase family.

It catalyses the reaction a 2,3-saturated acyl-CoA + O2 = a (2E)-enoyl-CoA + H2O2. This chain is Putative acyl-coenzyme A oxidase At3g06690, found in Arabidopsis thaliana (Mouse-ear cress).